A 265-amino-acid chain; its full sequence is MFVHPQFDPVAVSLGPLSIRWYGLMYLIGFAAAWLLGRYRASRPGSGWTPLQVDDLVTYMVLGVVVGGRLGYMLFYDLPAFLANPLSLVQVWQGGMSFHGGFLGVLAVVWFFGRKTGKGFWGVADFTAPLAPFGLFAGRIGNFINGELWGKATDLPWGVVFPDPRAGGVPRHPSQLYEALLEGAALFLIVWLYSSKKRQSGAVSGVFCVCYGLFRFAVELVRLPDPQLGYLAFGWLTMGQLLSLPVIVFGLWLLARRAPDQNASQ.

Transmembrane regions (helical) follow at residues 17–37 (LSIR…WLLG), 56–76 (LVTY…MLFY), 92–112 (WQGG…VWFF), and 117–137 (GKGF…GLFA). Position 139 (Arg-139) interacts with a 1,2-diacyl-sn-glycero-3-phospho-(1'-sn-glycerol). Transmembrane regions (helical) follow at residues 173-193 (PSQL…VWLY), 201-221 (GAVS…VELV), and 235-255 (WLTM…WLLA).

It belongs to the Lgt family.

The protein localises to the cell inner membrane. The catalysed reaction is L-cysteinyl-[prolipoprotein] + a 1,2-diacyl-sn-glycero-3-phospho-(1'-sn-glycerol) = an S-1,2-diacyl-sn-glyceryl-L-cysteinyl-[prolipoprotein] + sn-glycerol 1-phosphate + H(+). The protein operates within protein modification; lipoprotein biosynthesis (diacylglyceryl transfer). Its function is as follows. Catalyzes the transfer of the diacylglyceryl group from phosphatidylglycerol to the sulfhydryl group of the N-terminal cysteine of a prolipoprotein, the first step in the formation of mature lipoproteins. The sequence is that of Phosphatidylglycerol--prolipoprotein diacylglyceryl transferase from Solidesulfovibrio magneticus (strain ATCC 700980 / DSM 13731 / RS-1) (Desulfovibrio magneticus).